The following is a 104-amino-acid chain: Co-chaperonin GroES 2 (104 aa).

It belongs to the GroES chaperonin family. Heptamer of 7 subunits arranged in a ring. Interacts with the chaperonin GroEL.

Its subcellular location is the cytoplasm. Together with the chaperonin GroEL, plays an essential role in assisting protein folding. The GroEL-GroES system forms a nano-cage that allows encapsulation of the non-native substrate proteins and provides a physical environment optimized to promote and accelerate protein folding. GroES binds to the apical surface of the GroEL ring, thereby capping the opening of the GroEL channel. The sequence is that of Co-chaperonin GroES 2 from Rhodopseudomonas palustris (strain ATCC BAA-98 / CGA009).